A 397-amino-acid polypeptide reads, in one-letter code: Acid extracellular protease (397 aa).

A signal peptide spans 1–17 (MQFSLATLTTLLAFVAA). In terms of domain architecture, Peptidase A1 spans 61–378 (YQVQISLGGQ…DLERDEVSIA (318 aa)). The active site involves aspartate 77. N-linked (GlcNAc...) asparagine glycosylation occurs at asparagine 88. A disulfide bridge connects residues cysteine 93 and cysteine 100. Residue aspartate 264 is part of the active site. A disulfide bond links cysteine 303 and cysteine 343. Residues asparagine 310 and asparagine 314 are each glycosylated (N-linked (GlcNAc...) asparagine).

The protein belongs to the peptidase A1 family.

The protein resides in the secreted. This chain is Acid extracellular protease (AXP1), found in Yarrowia lipolytica (strain CLIB 122 / E 150) (Yeast).